Here is a 315-residue protein sequence, read N- to C-terminus: 4-hydroxy-3-methylbut-2-enyl diphosphate reductase (315 aa).

C12 is a [4Fe-4S] cluster binding site. 2 residues coordinate (2E)-4-hydroxy-3-methylbut-2-enyl diphosphate: H40 and H74. H40 and H74 together coordinate dimethylallyl diphosphate. Positions 40 and 74 each coordinate isopentenyl diphosphate. C96 serves as a coordination point for [4Fe-4S] cluster. H124 is a (2E)-4-hydroxy-3-methylbut-2-enyl diphosphate binding site. Residue H124 participates in dimethylallyl diphosphate binding. H124 is an isopentenyl diphosphate binding site. E126 serves as the catalytic Proton donor. A (2E)-4-hydroxy-3-methylbut-2-enyl diphosphate-binding site is contributed by T167. Position 213 (C213) interacts with [4Fe-4S] cluster. (2E)-4-hydroxy-3-methylbut-2-enyl diphosphate is bound by residues S241, S242, N243, and S290. The dimethylallyl diphosphate site is built by S241, S242, N243, and S290. Isopentenyl diphosphate-binding residues include S241, S242, N243, and S290.

Belongs to the IspH family. The cofactor is [4Fe-4S] cluster.

It carries out the reaction isopentenyl diphosphate + 2 oxidized [2Fe-2S]-[ferredoxin] + H2O = (2E)-4-hydroxy-3-methylbut-2-enyl diphosphate + 2 reduced [2Fe-2S]-[ferredoxin] + 2 H(+). It catalyses the reaction dimethylallyl diphosphate + 2 oxidized [2Fe-2S]-[ferredoxin] + H2O = (2E)-4-hydroxy-3-methylbut-2-enyl diphosphate + 2 reduced [2Fe-2S]-[ferredoxin] + 2 H(+). Its pathway is isoprenoid biosynthesis; dimethylallyl diphosphate biosynthesis; dimethylallyl diphosphate from (2E)-4-hydroxy-3-methylbutenyl diphosphate: step 1/1. It functions in the pathway isoprenoid biosynthesis; isopentenyl diphosphate biosynthesis via DXP pathway; isopentenyl diphosphate from 1-deoxy-D-xylulose 5-phosphate: step 6/6. Functionally, catalyzes the conversion of 1-hydroxy-2-methyl-2-(E)-butenyl 4-diphosphate (HMBPP) into a mixture of isopentenyl diphosphate (IPP) and dimethylallyl diphosphate (DMAPP). Acts in the terminal step of the DOXP/MEP pathway for isoprenoid precursor biosynthesis. The polypeptide is 4-hydroxy-3-methylbut-2-enyl diphosphate reductase (Chloroherpeton thalassium (strain ATCC 35110 / GB-78)).